Here is a 75-residue protein sequence, read N- to C-terminus: MKEGMSNNSTTSISQARKAVEQLKMEACMDRVKVSQAASDLLAYCEAHVREDPLIIPVPASENPFREKKFFCTIL.

Cys-72 carries the cysteine methyl ester modification. The S-geranylgeranyl cysteine moiety is linked to residue Cys-72. The propeptide at 73 to 75 is removed in mature form; sequence TIL.

Belongs to the G protein gamma family. As to quaternary structure, g proteins are composed of 3 units, alpha, beta and gamma. Interacts with beta-1 and beta-2, but not with beta-3. Interacts with KCNK1. Interacts (via C-terminus) with KCNK2/TREK-1 (via N-terminus); this interaction confers ion selectivity to Cl(-) and L-glutamate. Brain.

The protein localises to the cell membrane. In terms of biological role, guanine nucleotide-binding proteins (G proteins) are involved as a modulator or transducer in various transmembrane signaling systems. The beta and gamma chains are required for the GTPase activity, for replacement of GDP by GTP, and for G protein-effector interaction. This is Guanine nucleotide-binding protein G(I)/G(S)/G(O) subunit gamma-4 (Gng4) from Mus musculus (Mouse).